The following is a 180-amino-acid chain: tRNA-splicing endonuclease (180 aa).

Catalysis depends on residues tyrosine 117, histidine 125, and lysine 156.

This sequence belongs to the tRNA-intron endonuclease family. Archaeal short subfamily. As to quaternary structure, homotetramer; although the tetramer contains four active sites, only two participate in the cleavage. Therefore, it should be considered as a dimer of dimers.

The catalysed reaction is pretRNA = a 3'-half-tRNA molecule with a 5'-OH end + a 5'-half-tRNA molecule with a 2',3'-cyclic phosphate end + an intron with a 2',3'-cyclic phosphate and a 5'-hydroxyl terminus.. Functionally, endonuclease that removes tRNA introns. Cleaves pre-tRNA at the 5'- and 3'-splice sites to release the intron. The products are an intron and two tRNA half-molecules bearing 2',3' cyclic phosphate and 5'-OH termini. Recognizes a pseudosymmetric substrate in which 2 bulged loops of 3 bases are separated by a stem of 4 bp. The chain is tRNA-splicing endonuclease from Sulfurisphaera tokodaii (strain DSM 16993 / JCM 10545 / NBRC 100140 / 7) (Sulfolobus tokodaii).